A 46-amino-acid chain; its full sequence is uncharacterized protein (46 aa).

It is found in the plastid. The protein resides in the chloroplast. This is an uncharacterized protein from Trieres chinensis (Marine centric diatom).